The following is a 504-amino-acid chain: Maturase K (504 aa).

This sequence belongs to the intron maturase 2 family. MatK subfamily.

It localises to the plastid. The protein localises to the chloroplast. In terms of biological role, usually encoded in the trnK tRNA gene intron. Probably assists in splicing its own and other chloroplast group II introns. This chain is Maturase K, found in Arabidopsis halleri.